Consider the following 309-residue polypeptide: Peptide methionine sulfoxide reductase MsrA/MsrB (309 aa).

Positions 1–153 (MIYLAEGCFW…PNGYCHIDIN (153 aa)) are peptide methionine sulfoxide reductase A. Cys-8 is a catalytic residue. The MsrB domain maps to 170 to 293 (ATEIKAKLSA…NSLSITFIPK (124 aa)). Catalysis depends on Cys-282, which acts as the Nucleophile.

This sequence in the N-terminal section; belongs to the MsrA Met sulfoxide reductase family. The protein in the C-terminal section; belongs to the MsrB Met sulfoxide reductase family.

It catalyses the reaction L-methionyl-[protein] + [thioredoxin]-disulfide + H2O = L-methionyl-(S)-S-oxide-[protein] + [thioredoxin]-dithiol. It carries out the reaction [thioredoxin]-disulfide + L-methionine + H2O = L-methionine (S)-S-oxide + [thioredoxin]-dithiol. The enzyme catalyses L-methionyl-[protein] + [thioredoxin]-disulfide + H2O = L-methionyl-(R)-S-oxide-[protein] + [thioredoxin]-dithiol. Has an important function as a repair enzyme for proteins that have been inactivated by oxidation. Catalyzes the reversible oxidation-reduction of methionine sulfoxide in proteins to methionine. This Streptococcus pyogenes serotype M3 (strain ATCC BAA-595 / MGAS315) protein is Peptide methionine sulfoxide reductase MsrA/MsrB (msrAB).